A 556-amino-acid polypeptide reads, in one-letter code: Formate--tetrahydrofolate ligase (556 aa).

ATP is bound at residue 65–72 (TPAGEGKT).

This sequence belongs to the formate--tetrahydrofolate ligase family.

The catalysed reaction is (6S)-5,6,7,8-tetrahydrofolate + formate + ATP = (6R)-10-formyltetrahydrofolate + ADP + phosphate. It functions in the pathway one-carbon metabolism; tetrahydrofolate interconversion. This is Formate--tetrahydrofolate ligase from Acetivibrio thermocellus (strain ATCC 27405 / DSM 1237 / JCM 9322 / NBRC 103400 / NCIMB 10682 / NRRL B-4536 / VPI 7372) (Clostridium thermocellum).